The primary structure comprises 204 residues: uncharacterized protein (204 aa).

This is an uncharacterized protein from Methanocaldococcus jannaschii (strain ATCC 43067 / DSM 2661 / JAL-1 / JCM 10045 / NBRC 100440) (Methanococcus jannaschii).